The sequence spans 348 residues: Calcium homeostasis modulator protein 1 (348 aa).

Over Met1 to Asn20 the chain is Cytoplasmic. Residues Gln9–Ala36 are central pore. Residues Gly21–Ala36 form a helical membrane-spanning segment. The Extracellular portion of the chain corresponds to Phe37 to Asn48. 2 disulfides stabilise this stretch: Cys41–Cys126 and Cys43–Cys160. A helical transmembrane segment spans residues Val49–Asn71. The tract at residues Val62–Val69 is phospholipid-binding. Residues Asn72–Met98 lie on the Cytoplasmic side of the membrane. Residues Phe99–Phe124 traverse the membrane as a helical segment. Residue Cys100 is the site of S-palmitoyl cysteine attachment. Residues Gln104 to Val116 form a phospholipid-binding region. Topologically, residues Leu125–Leu179 are extracellular. Asn139 is a glycosylation site (N-linked (GlcNAc...) asparagine). The chain crosses the membrane as a helical span at residues Arg180 to Arg205. The segment at Val191–Val201 is phospholipid-binding. At Pro206–Val348 the chain is on the cytoplasmic side. The S-palmitoyl cysteine moiety is linked to residue Cys207. Residues Leu324–Val348 are disordered.

It belongs to the CALHM family. As to quaternary structure, oligomerizes to form hexamers and octamers. Does not form gap junctions. Associates with CALHM3 as a pore-forming subunit in a hetero-hexameric channel complex. N-glycosylated. Assembly with CALHM3 is associated with N-glycan remodeling and formation of hybrid complex- and high mannose-type glycochains. This N-glycan processing regulates channel trafficking and gating kinetics. In terms of processing, palmitoylated by ZDHHC3, ZDHHC20 and possibly ZDHHC7. Palmitoylation regulates voltage-dependent gating of the channel by shifting it toward more depolarized potentials. In terms of tissue distribution, specifically expressed in type II taste bud cells (at protein level). Not expressed in brain.

It is found in the cell membrane. It localises to the endoplasmic reticulum membrane. The protein localises to the basolateral cell membrane. The catalysed reaction is ATP(in) = ATP(out). It carries out the reaction Ca(2+)(in) = Ca(2+)(out). It catalyses the reaction Mg(2+)(in) = Mg(2+)(out). The enzyme catalyses Na(+)(in) = Na(+)(out). The catalysed reaction is K(+)(in) = K(+)(out). It carries out the reaction Li(+)(in) = Li(+)(out). It catalyses the reaction Rb(+)(in) = Rb(+)(out). The enzyme catalyses Cs(+)(in) = Cs(+)(out). The catalysed reaction is chloride(in) = chloride(out). Regulated by membrane voltage and extracellular Ca(2+). Inhibited by Gd(3+), ruthenium red, and Zn(2+) and partially inhibited by 2-aminoethoxydiphenyl borate. In terms of biological role, pore-forming subunit of gustatory voltage-gated ion channels required for sensory perception of sweet, bitter and umami tastes. With CALHM3 forms a fast-activating voltage-gated ATP-release channel in type II taste bud cells, ATP acting as a neurotransmitter to activate afferent neural gustatory pathways. Acts both as a voltage-gated and calcium-activated ion channel: mediates neuronal excitability in response to membrane depolarization and low extracellular Ca(2+) concentration. Has poor ion selectivity and forms a wide pore (around 14 Angstroms) that mediates permeation of small ions including Ca(2+), Na(+), K(+) and Cl(-), as well as larger ions such as ATP(4-). Mediates Ca(2+) influx and downstream activation of the ERK1 and ERK2 cascade in neurons. Triggers endoplasmic reticulum stress by reducing the calcium content of the endoplasmic reticulum. May indirectly control amyloid precursor protein (APP) proteolysis and aggregated amyloid-beta (Abeta) peptides levels in a Ca(2+) dependent manner. This Mus musculus (Mouse) protein is Calcium homeostasis modulator protein 1.